A 436-amino-acid chain; its full sequence is Methyl-accepting chemotaxis protein Amb0994 (436 aa).

The Cytoplasmic segment spans residues 1-8 (METTLGSY). Residues 9–29 (ARTLSLGMLVPSAICLLAGTF) traverse the membrane as a helical segment. Residue glycine 30 is a topological domain, periplasmic. Residues 31–51 (LLGGSSIALWVVIAVSLLGVV) form a helical membrane-spanning segment. Residues 52-436 (GGVKIGGSAR…DGFIARIGGR (385 aa)) lie on the Cytoplasmic side of the membrane. The 237-residue stretch at 180–416 (AATELEASSG…QVADAASELS (237 aa)) folds into the Methyl-accepting transducer domain. Glutamine 211 carries the post-translational modification Glutamate methyl ester (Gln). At glutamate 225 the chain carries Glutamate methyl ester (Glu). The tract at residues 321–436 (TEDITSQVAH…DGFIARIGGR (116 aa)) is required for interaction with MamK and to respond to the magnetic field.

This sequence belongs to the methyl-accepting chemotaxis (MCP) protein family. In terms of assembly, interacts with MamK at cell poles and septa.

The protein localises to the cell inner membrane. Its function is as follows. Probable methyl-accepting taxis protein. May be the receptor that senses the torque generated from the interaction between the magnetosome dipole moment and the external magnetic field. Overproduction interferes with magnetotaxis, cells respond more slowly to changes in the magnetic field; requires the MamK-interacting C-terminus of the protein. The effect of magnetic sensing is to control flagellar rotation. In terms of biological role, chemotactic-signal transducers respond to changes in the concentration of attractants and repellents in the environment, transduce a signal from the outside to the inside of the cell, and facilitate sensory adaptation through variation of methylation levels. Attractants increase the level of methylation while repellents decrease the level of methylation. In Paramagnetospirillum magneticum (strain ATCC 700264 / AMB-1) (Magnetospirillum magneticum), this protein is Methyl-accepting chemotaxis protein Amb0994.